The chain runs to 534 residues: Probable bifunctional tRNA threonylcarbamoyladenosine biosynthesis protein (534 aa).

Positions 1 to 325 are kae1; it reads MLCLGIEGTA…YRTDEVDVPW (325 aa). Residues His-108, His-112, and Tyr-129 each coordinate Fe cation. L-threonylcarbamoyladenylate-binding positions include 129–133, Asp-161, Gly-174, Glu-178, and Asn-258; that span reads YVSGG. Asp-286 lines the Fe cation pocket. The region spanning 335–534 is the Protein kinase domain; it reads LPPDILAKGA…EIESRGRYTD (200 aa). Residues 340–348 and Lys-361 contribute to the ATP site; that span reads LAKGAEANI. Catalysis depends on Asp-451, which acts as the Proton acceptor; for kinase activity.

It in the N-terminal section; belongs to the KAE1 / TsaD family. The protein in the C-terminal section; belongs to the protein kinase superfamily. Tyr protein kinase family. BUD32 subfamily. In terms of assembly, component of the KEOPS complex that consists of Kae1, Bud32, Cgi121 and Pcc1; the whole complex dimerizes. The cofactor is Fe(2+).

Its subcellular location is the cytoplasm. The enzyme catalyses L-seryl-[protein] + ATP = O-phospho-L-seryl-[protein] + ADP + H(+). It carries out the reaction L-threonyl-[protein] + ATP = O-phospho-L-threonyl-[protein] + ADP + H(+). It catalyses the reaction L-threonylcarbamoyladenylate + adenosine(37) in tRNA = N(6)-L-threonylcarbamoyladenosine(37) in tRNA + AMP + H(+). Its function is as follows. Required for the formation of a threonylcarbamoyl group on adenosine at position 37 (t(6)A37) in tRNAs that read codons beginning with adenine. Is a component of the KEOPS complex that is probably involved in the transfer of the threonylcarbamoyl moiety of threonylcarbamoyl-AMP (TC-AMP) to the N6 group of A37. The Kae1 domain likely plays a direct catalytic role in this reaction. The Bud32 domain probably displays kinase activity that regulates Kae1 function. This Methanothermobacter thermautotrophicus (strain ATCC 29096 / DSM 1053 / JCM 10044 / NBRC 100330 / Delta H) (Methanobacterium thermoautotrophicum) protein is Probable bifunctional tRNA threonylcarbamoyladenosine biosynthesis protein.